Reading from the N-terminus, the 610-residue chain is UvrABC system protein C (610 aa).

Positions 16 to 94 constitute a GIY-YIG domain; that stretch reads SQPGVYRMYD…IKLYQPRYNV (79 aa). The UVR domain maps to 204-239; that stretch reads DQVLTQLIARMEKASQNLEFEEAARIRDQIQAVRRV.

The protein belongs to the UvrC family. As to quaternary structure, interacts with UvrB in an incision complex.

Its subcellular location is the cytoplasm. Functionally, the UvrABC repair system catalyzes the recognition and processing of DNA lesions. UvrC both incises the 5' and 3' sides of the lesion. The N-terminal half is responsible for the 3' incision and the C-terminal half is responsible for the 5' incision. The chain is UvrABC system protein C from Escherichia fergusonii (strain ATCC 35469 / DSM 13698 / CCUG 18766 / IAM 14443 / JCM 21226 / LMG 7866 / NBRC 102419 / NCTC 12128 / CDC 0568-73).